The sequence spans 103 residues: uncharacterized protein (103 aa).

This is an uncharacterized protein from Acanthamoeba polyphaga (Amoeba).